Consider the following 530-residue polypeptide: Putative ABC transporter ATP-binding protein SSO2030 (530 aa).

2 ABC transporter domains span residues 6–243 and 282–516; these read IRDL…LGLE and ALYA…EPPL. Residues 38-45 and 314-321 each bind ATP; these read GRSGSGKS and GKNGSGKT.

This sequence belongs to the ABC transporter superfamily.

The protein localises to the cell membrane. Its function is as follows. Probably part of an ABC transporter complex. Responsible for energy coupling to the transport system. This Saccharolobus solfataricus (strain ATCC 35092 / DSM 1617 / JCM 11322 / P2) (Sulfolobus solfataricus) protein is Putative ABC transporter ATP-binding protein SSO2030.